The sequence spans 244 residues: Small ribosomal subunit protein uS2 (244 aa).

Belongs to the universal ribosomal protein uS2 family.

This chain is Small ribosomal subunit protein uS2, found in Desulforudis audaxviator (strain MP104C).